We begin with the raw amino-acid sequence, 140 residues long: Nucleoside diphosphate kinase (140 aa).

ATP is bound by residues lysine 11, phenylalanine 59, arginine 87, threonine 93, arginine 104, and asparagine 114. Histidine 117 (pros-phosphohistidine intermediate) is an active-site residue.

Belongs to the NDK family. As to quaternary structure, homotetramer. The cofactor is Mg(2+).

It is found in the cytoplasm. It carries out the reaction a 2'-deoxyribonucleoside 5'-diphosphate + ATP = a 2'-deoxyribonucleoside 5'-triphosphate + ADP. The catalysed reaction is a ribonucleoside 5'-diphosphate + ATP = a ribonucleoside 5'-triphosphate + ADP. Functionally, major role in the synthesis of nucleoside triphosphates other than ATP. The ATP gamma phosphate is transferred to the NDP beta phosphate via a ping-pong mechanism, using a phosphorylated active-site intermediate. The sequence is that of Nucleoside diphosphate kinase from Brucella melitensis biotype 1 (strain ATCC 23456 / CCUG 17765 / NCTC 10094 / 16M).